Consider the following 243-residue polypeptide: ATP-dependent dethiobiotin synthetase BioD (243 aa).

12–17 lines the ATP pocket; the sequence is DVGKTL. Position 16 (T16) interacts with Mg(2+). The active site involves K37. Substrate is bound at residue S41. ATP is bound by residues D54, 115 to 118, and 179 to 180; these read EGCG and NM. Mg(2+)-binding residues include D54 and E115.

Belongs to the dethiobiotin synthetase family. In terms of assembly, homodimer. Mg(2+) is required as a cofactor.

It is found in the cytoplasm. The catalysed reaction is (7R,8S)-7,8-diammoniononanoate + CO2 + ATP = (4R,5S)-dethiobiotin + ADP + phosphate + 3 H(+). The protein operates within cofactor biosynthesis; biotin biosynthesis; biotin from 7,8-diaminononanoate: step 1/2. Its function is as follows. Catalyzes a mechanistically unusual reaction, the ATP-dependent insertion of CO2 between the N7 and N8 nitrogen atoms of 7,8-diaminopelargonic acid (DAPA, also called 7,8-diammoniononanoate) to form a ureido ring. This Caldicellulosiruptor saccharolyticus (strain ATCC 43494 / DSM 8903 / Tp8T 6331) protein is ATP-dependent dethiobiotin synthetase BioD.